The sequence spans 430 residues: Protein translocase subunit SecY (430 aa).

The next 10 helical transmembrane spans lie at 18–38 (VIFT…PVPG), 67–87 (FSIF…MQLL), 118–138 (IVLG…FFPG), 145–165 (VSVY…LMWL), 177–197 (GISI…LNLI), 213–233 (IVVI…VIFV), 270–290 (VIPV…AGLF), 309–329 (PIGM…YTFI), 369–389 (FVGS…IKFA), and 390–410 (DLPQ…GVAL).

This sequence belongs to the SecY/SEC61-alpha family. Component of the Sec protein translocase complex. Heterotrimer consisting of SecY, SecE and SecG subunits. The heterotrimers can form oligomers, although 1 heterotrimer is thought to be able to translocate proteins. Interacts with the ribosome. Interacts with SecDF, and other proteins may be involved. Interacts with SecA.

It is found in the cell membrane. Functionally, the central subunit of the protein translocation channel SecYEG. Consists of two halves formed by TMs 1-5 and 6-10. These two domains form a lateral gate at the front which open onto the bilayer between TMs 2 and 7, and are clamped together by SecE at the back. The channel is closed by both a pore ring composed of hydrophobic SecY resides and a short helix (helix 2A) on the extracellular side of the membrane which forms a plug. The plug probably moves laterally to allow the channel to open. The ring and the pore may move independently. This is Protein translocase subunit SecY from Halalkalibacterium halodurans (strain ATCC BAA-125 / DSM 18197 / FERM 7344 / JCM 9153 / C-125) (Bacillus halodurans).